The sequence spans 223 residues: Urease accessory protein UreF (223 aa).

It belongs to the UreF family. As to quaternary structure, ureD, UreF and UreG form a complex that acts as a GTP-hydrolysis-dependent molecular chaperone, activating the urease apoprotein by helping to assemble the nickel containing metallocenter of UreC. The UreE protein probably delivers the nickel.

The protein localises to the cytoplasm. In terms of biological role, required for maturation of urease via the functional incorporation of the urease nickel metallocenter. The sequence is that of Urease accessory protein UreF from Mesorhizobium japonicum (strain LMG 29417 / CECT 9101 / MAFF 303099) (Mesorhizobium loti (strain MAFF 303099)).